Here is a 236-residue protein sequence, read N- to C-terminus: tRNA1(Val) (adenine(37)-N6)-methyltransferase (236 aa).

It belongs to the methyltransferase superfamily. tRNA (adenine-N(6)-)-methyltransferase family.

The protein localises to the cytoplasm. It carries out the reaction adenosine(37) in tRNA1(Val) + S-adenosyl-L-methionine = N(6)-methyladenosine(37) in tRNA1(Val) + S-adenosyl-L-homocysteine + H(+). Its function is as follows. Specifically methylates the adenine in position 37 of tRNA(1)(Val) (anticodon cmo5UAC). This chain is tRNA1(Val) (adenine(37)-N6)-methyltransferase, found in Aeromonas salmonicida (strain A449).